The sequence spans 214 residues: Probable transaldolase (214 aa).

The Schiff-base intermediate with substrate role is filled by lysine 83.

The protein belongs to the transaldolase family. Type 3B subfamily.

The protein localises to the cytoplasm. It catalyses the reaction D-sedoheptulose 7-phosphate + D-glyceraldehyde 3-phosphate = D-erythrose 4-phosphate + beta-D-fructose 6-phosphate. It functions in the pathway carbohydrate degradation; pentose phosphate pathway; D-glyceraldehyde 3-phosphate and beta-D-fructose 6-phosphate from D-ribose 5-phosphate and D-xylulose 5-phosphate (non-oxidative stage): step 2/3. In terms of biological role, transaldolase is important for the balance of metabolites in the pentose-phosphate pathway. This Geotalea uraniireducens (strain Rf4) (Geobacter uraniireducens) protein is Probable transaldolase.